Here is a 78-residue protein sequence, read N- to C-terminus: ATP synthase subunit c (78 aa).

Transmembrane regions (helical) follow at residues 12 to 32 (IGAG…GHVV) and 54 to 74 (FIGI…ALLL).

Belongs to the ATPase C chain family. F-type ATPases have 2 components, F(1) - the catalytic core - and F(0) - the membrane proton channel. F(1) has five subunits: alpha(3), beta(3), gamma(1), delta(1), epsilon(1). F(0) has four main subunits: a(1), b(1), b'(1) and c(10-14). The alpha and beta chains form an alternating ring which encloses part of the gamma chain. F(1) is attached to F(0) by a central stalk formed by the gamma and epsilon chains, while a peripheral stalk is formed by the delta, b and b' chains.

The protein localises to the cellular chromatophore membrane. F(1)F(0) ATP synthase produces ATP from ADP in the presence of a proton or sodium gradient. F-type ATPases consist of two structural domains, F(1) containing the extramembraneous catalytic core and F(0) containing the membrane proton channel, linked together by a central stalk and a peripheral stalk. During catalysis, ATP synthesis in the catalytic domain of F(1) is coupled via a rotary mechanism of the central stalk subunits to proton translocation. In terms of biological role, key component of the F(0) channel; it plays a direct role in translocation across the membrane. A homomeric c-ring of between 10-14 subunits forms the central stalk rotor element with the F(1) delta and epsilon subunits. The chain is ATP synthase subunit c from Rhodobacter capsulatus (Rhodopseudomonas capsulata).